The following is a 166-amino-acid chain: UPF0561 protein C2orf68 homolog (166 aa).

Residues 36–49 show a composition bias toward basic and acidic residues; it reads RDDYDKKVKQAAKE. Residues 36–108 form a disordered region; that stretch reads RDDYDKKVKQ…EPEPPGHQLF (73 aa).

This sequence belongs to the UPF0561 family.

This chain is UPF0561 protein C2orf68 homolog, found in Bos taurus (Bovine).